The chain runs to 227 residues: Cytidylate kinase (227 aa).

An ATP-binding site is contributed by 12-20 (GPSGAGKGT).

The protein belongs to the cytidylate kinase family. Type 1 subfamily.

It is found in the cytoplasm. The enzyme catalyses CMP + ATP = CDP + ADP. It carries out the reaction dCMP + ATP = dCDP + ADP. This Salmonella typhimurium (strain LT2 / SGSC1412 / ATCC 700720) protein is Cytidylate kinase.